Here is a 244-residue protein sequence, read N- to C-terminus: Uridylate kinase (244 aa).

ATP is bound at residue 11–14 (KLSG). Residues 19 to 24 (GSLGYG) are involved in allosteric activation by GTP. Glycine 53 is a UMP binding site. Residues glycine 54 and arginine 58 each coordinate ATP. Residues aspartate 73 and 134–141 (SGNPFFTT) contribute to the UMP site. ATP-binding residues include threonine 161, tyrosine 167, and aspartate 170.

This sequence belongs to the UMP kinase family. As to quaternary structure, homohexamer.

The protein localises to the cytoplasm. It catalyses the reaction UMP + ATP = UDP + ADP. It functions in the pathway pyrimidine metabolism; CTP biosynthesis via de novo pathway; UDP from UMP (UMPK route): step 1/1. Its activity is regulated as follows. Allosterically activated by GTP. Inhibited by UTP. Catalyzes the reversible phosphorylation of UMP to UDP. This chain is Uridylate kinase, found in Trichodesmium erythraeum (strain IMS101).